A 92-amino-acid polypeptide reads, in one-letter code: Small ribosomal subunit protein uS19 (92 aa).

This sequence belongs to the universal ribosomal protein uS19 family.

Its function is as follows. Protein S19 forms a complex with S13 that binds strongly to the 16S ribosomal RNA. The sequence is that of Small ribosomal subunit protein uS19 from Shigella boydii serotype 18 (strain CDC 3083-94 / BS512).